The chain runs to 197 residues: Molybdenum cofactor guanylyltransferase (197 aa).

GTP is bound by residues 10 to 12 (LAG), K23, N51, D69, and D99. Position 99 (D99) interacts with Mg(2+).

Belongs to the MobA family. In terms of assembly, monomer. The cofactor is Mg(2+).

It localises to the cytoplasm. The enzyme catalyses Mo-molybdopterin + GTP + H(+) = Mo-molybdopterin guanine dinucleotide + diphosphate. Functionally, transfers a GMP moiety from GTP to Mo-molybdopterin (Mo-MPT) cofactor (Moco or molybdenum cofactor) to form Mo-molybdopterin guanine dinucleotide (Mo-MGD) cofactor. This Shewanella sp. (strain MR-4) protein is Molybdenum cofactor guanylyltransferase.